Reading from the N-terminus, the 69-residue chain is MSVLTPLLLRGLTGPARRLPVPRAQIHSKPPREQLGTMDIAIGLTSCFLCFLLPSGWVLSHMENYKKRE.

Residues 1-25 (MSVLTPLLLRGLTGPARRLPVPRAQ) constitute a mitochondrion transit peptide. Positions 2-19 (SVLTPLLLRGLTGPARRL) match the SIFI-degron motif. At 26–36 (IHSKPPREQLG) the chain is on the mitochondrial matrix side. The chain crosses the membrane as a helical span at residues 37 to 60 (TMDIAIGLTSCFLCFLLPSGWVLS). Residues 61 to 69 (HMENYKKRE) lie on the Mitochondrial intermembrane side of the membrane.

This sequence belongs to the cytochrome c oxidase VIII family. In terms of assembly, component of the cytochrome c oxidase (complex IV, CIV), a multisubunit enzyme composed of 14 subunits. The complex is composed of a catalytic core of 3 subunits MT-CO1, MT-CO2 and MT-CO3, encoded in the mitochondrial DNA, and 11 supernumerary subunits COX4I1 (or COX4I2), COX5A, COX5B, COX6A2 (or COX6A1), COX6B1 (or COX6B2), COX6C, COX7A1 (or COX7A2), COX7B, COX7C, COX8B and NDUFA4, which are encoded in the nuclear genome. The complex exists as a monomer or a dimer and forms supercomplexes (SCs) in the inner mitochondrial membrane with NADH-ubiquinone oxidoreductase (complex I, CI) and ubiquinol-cytochrome c oxidoreductase (cytochrome b-c1 complex, complex III, CIII), resulting in different assemblies (supercomplex SCI(1)III(2)IV(1) and megacomplex MCI(2)III(2)IV(2)). In terms of processing, in response to mitochondrial stress, the precursor protein is ubiquitinated by the SIFI complex in the cytoplasm before mitochondrial import, leading to its degradation. Within the SIFI complex, UBR4 initiates ubiquitin chain that are further elongated or branched by KCMF1.

The protein resides in the mitochondrion inner membrane. The protein operates within energy metabolism; oxidative phosphorylation. Component of the cytochrome c oxidase, the last enzyme in the mitochondrial electron transport chain which drives oxidative phosphorylation. The respiratory chain contains 3 multisubunit complexes succinate dehydrogenase (complex II, CII), ubiquinol-cytochrome c oxidoreductase (cytochrome b-c1 complex, complex III, CIII) and cytochrome c oxidase (complex IV, CIV), that cooperate to transfer electrons derived from NADH and succinate to molecular oxygen, creating an electrochemical gradient over the inner membrane that drives transmembrane transport and the ATP synthase. Cytochrome c oxidase is the component of the respiratory chain that catalyzes the reduction of oxygen to water. Electrons originating from reduced cytochrome c in the intermembrane space (IMS) are transferred via the dinuclear copper A center (CU(A)) of subunit 2 and heme A of subunit 1 to the active site in subunit 1, a binuclear center (BNC) formed by heme A3 and copper B (CU(B)). The BNC reduces molecular oxygen to 2 water molecules using 4 electrons from cytochrome c in the IMS and 4 protons from the mitochondrial matrix. This is Cytochrome c oxidase subunit 8A, mitochondrial (COX8A) from Bos taurus (Bovine).